Reading from the N-terminus, the 121-residue chain is Putative ankyrin repeat protein L215 (121 aa).

ANK repeat units follow at residues 10-40 (QYDS…SFKE) and 42-71 (IHET…NKLV).

In Acanthamoeba polyphaga mimivirus (APMV), this protein is Putative ankyrin repeat protein L215.